Here is a 424-residue protein sequence, read N- to C-terminus: Glutamyl-tRNA reductase (424 aa).

Residues 51-54 (TCNR), Ser-99, 104-106 (EDQ), and Gln-110 each bind substrate. Cys-52 acts as the Nucleophile in catalysis. 179 to 184 (GTGEMG) is a binding site for NADP(+).

Belongs to the glutamyl-tRNA reductase family. As to quaternary structure, homodimer.

It carries out the reaction (S)-4-amino-5-oxopentanoate + tRNA(Glu) + NADP(+) = L-glutamyl-tRNA(Glu) + NADPH + H(+). It participates in porphyrin-containing compound metabolism; protoporphyrin-IX biosynthesis; 5-aminolevulinate from L-glutamyl-tRNA(Glu): step 1/2. Functionally, catalyzes the NADPH-dependent reduction of glutamyl-tRNA(Glu) to glutamate 1-semialdehyde (GSA). This is Glutamyl-tRNA reductase from Methanospirillum hungatei JF-1 (strain ATCC 27890 / DSM 864 / NBRC 100397 / JF-1).